Reading from the N-terminus, the 348-residue chain is Heat-inducible transcription repressor HrcA (348 aa).

Belongs to the HrcA family.

Functionally, negative regulator of class I heat shock genes (grpE-dnaK-dnaJ and groELS operons). Prevents heat-shock induction of these operons. This chain is Heat-inducible transcription repressor HrcA, found in Lacticaseibacillus casei (strain BL23) (Lactobacillus casei).